The primary structure comprises 87 residues: Small ribosomal subunit protein bS18 (87 aa).

The protein belongs to the bacterial ribosomal protein bS18 family. In terms of assembly, part of the 30S ribosomal subunit. Forms a tight heterodimer with protein bS6.

Binds as a heterodimer with protein bS6 to the central domain of the 16S rRNA, where it helps stabilize the platform of the 30S subunit. This Sulfurovum sp. (strain NBC37-1) protein is Small ribosomal subunit protein bS18.